The primary structure comprises 310 residues: Protoheme IX farnesyltransferase (310 aa).

9 consecutive transmembrane segments (helical) span residues 30–47 (VTTL…FGAA), 50–70 (GLPL…LVSG), 102–122 (LGHG…YLGL), 126–146 (WLTA…YTPL), 152–172 (ICTT…WTAI), 181–201 (VALF…IAWL), 228–248 (IVIY…LRFA), 251–271 (IYFL…LRMF), and 286–306 (ARQL…VMML).

Belongs to the UbiA prenyltransferase family. Protoheme IX farnesyltransferase subfamily.

The protein resides in the cell inner membrane. The catalysed reaction is heme b + (2E,6E)-farnesyl diphosphate + H2O = Fe(II)-heme o + diphosphate. The protein operates within porphyrin-containing compound metabolism; heme O biosynthesis; heme O from protoheme: step 1/1. Functionally, converts heme B (protoheme IX) to heme O by substitution of the vinyl group on carbon 2 of heme B porphyrin ring with a hydroxyethyl farnesyl side group. The chain is Protoheme IX farnesyltransferase from Koribacter versatilis (strain Ellin345).